Consider the following 1997-residue polypeptide: Autophagy-related protein 2 homolog A (1997 aa).

Residues 17–119 (CRYLLQHYLG…RGAAQGTESQ (103 aa)) form the Chorein N-terminal domain. Disordered regions lie at residues 241–281 (TSVQ…IQQI), 1292–1323 (HCPP…CLPA), 1371–1414 (EEIK…TDTD), 1492–1534 (SSRP…TQGG), and 1684–1718 (RLDG…SSTD). Pro residues predominate over residues 1311–1321 (PEGPSSLPPCL). Polar residues-rich tracts occupy residues 1393-1408 (RVSQ…SGDS), 1493-1532 (SRPN…WRTQ), and 1690-1718 (KSSS…SSTD).

This sequence belongs to the ATG2 family.

It localises to the preautophagosomal structure membrane. The protein localises to the lipid droplet. It is found in the endoplasmic reticulum membrane. It carries out the reaction a 1,2-diacyl-sn-glycero-3-phospho-L-serine(in) = a 1,2-diacyl-sn-glycero-3-phospho-L-serine(out). It catalyses the reaction a 1,2-diacyl-sn-glycero-3-phosphoethanolamine(in) = a 1,2-diacyl-sn-glycero-3-phosphoethanolamine(out). In terms of biological role, lipid transfer protein involved in autophagosome assembly. Tethers the edge of the isolation membrane (IM) to the endoplasmic reticulum (ER) and mediates direct lipid transfer from ER to IM for IM expansion. Binds to the ER exit site (ERES), which is the membrane source for autophagosome formation, and extracts phospholipids from the membrane source and transfers them to atg9 (atg9a or atg9b) to the IM for membrane expansion. Also regulates lipid droplets morphology and distribution within the cell. This chain is Autophagy-related protein 2 homolog A, found in Xenopus tropicalis (Western clawed frog).